The chain runs to 213 residues: dITP/XTP pyrophosphatase (213 aa).

17-22 is a substrate binding site; that stretch reads SNNAGK. Mg(2+) is bound by residues Glu-49 and Asp-78. Residue Asp-78 is the Proton acceptor of the active site. Substrate contacts are provided by residues Ser-79, 164-167, Lys-187, and 192-193; these read FGYD and HR.

The protein belongs to the HAM1 NTPase family. Homodimer. Requires Mg(2+) as cofactor.

It catalyses the reaction XTP + H2O = XMP + diphosphate + H(+). The catalysed reaction is dITP + H2O = dIMP + diphosphate + H(+). The enzyme catalyses ITP + H2O = IMP + diphosphate + H(+). Its function is as follows. Pyrophosphatase that catalyzes the hydrolysis of nucleoside triphosphates to their monophosphate derivatives, with a high preference for the non-canonical purine nucleotides XTP (xanthosine triphosphate), dITP (deoxyinosine triphosphate) and ITP. Seems to function as a house-cleaning enzyme that removes non-canonical purine nucleotides from the nucleotide pool, thus preventing their incorporation into DNA/RNA and avoiding chromosomal lesions. This chain is dITP/XTP pyrophosphatase, found in Bordetella bronchiseptica (strain ATCC BAA-588 / NCTC 13252 / RB50) (Alcaligenes bronchisepticus).